Reading from the N-terminus, the 135-residue chain is MQILHTMLRVGDLDRSIKFYQDVLGMRLLRTSENPEYKYTLAFLGYEDGESAAEIELTYNWGVDKYEHGTAYGHIAIGVDDIYATCEAVRASGGNVTREAGPVKGGSTVIAFVEDPDGYKIEFIENKSTKSGLGN.

The 125-residue stretch at 2 to 126 folds into the VOC domain; it reads QILHTMLRVG…DGYKIEFIEN (125 aa). Histidine 5 is a Ni(2+) binding site. Residue arginine 9 participates in substrate binding. Glutamate 56 contacts Ni(2+). Positions 60 and 74 each coordinate substrate. Positions 74 and 122 each coordinate Ni(2+). The active-site Proton donor/acceptor is the glutamate 122.

The protein belongs to the glyoxalase I family. In terms of assembly, homodimer. The cofactor is Ni(2+).

The enzyme catalyses (R)-S-lactoylglutathione = methylglyoxal + glutathione. It functions in the pathway secondary metabolite metabolism; methylglyoxal degradation; (R)-lactate from methylglyoxal: step 1/2. Catalyzes the conversion of hemimercaptal, formed from methylglyoxal and glutathione, to S-lactoylglutathione. This chain is Lactoylglutathione lyase (gloA), found in Haemophilus influenzae (strain ATCC 51907 / DSM 11121 / KW20 / Rd).